The chain runs to 162 residues: Protein archease (162 aa).

Residues Asp-34, Asp-161, and Ile-162 each coordinate Ca(2+).

Belongs to the archease family. Component of the tRNA-splicing ligase complex.

In terms of biological role, component of the tRNA-splicing ligase complex required to facilitate the enzymatic turnover of catalytic subunit RTCB. Together with ddx1, acts by facilitating the guanylylation of RTCB, a key intermediate step in tRNA ligation. In Danio rerio (Zebrafish), this protein is Protein archease (zbtb8os).